The sequence spans 142 residues: Small ribosomal subunit protein uS12 (142 aa).

This sequence belongs to the universal ribosomal protein uS12 family. Part of the 30S ribosomal subunit.

With S4 and S5 plays an important role in translational accuracy. Located at the interface of the 30S and 50S subunits. The chain is Small ribosomal subunit protein uS12 from Methanothrix thermoacetophila (strain DSM 6194 / JCM 14653 / NBRC 101360 / PT) (Methanosaeta thermophila).